Here is a 185-residue protein sequence, read N- to C-terminus: MVSSWRVQQAAREIRAGAVIAYPTEAVWGLGCDPWNEDAVYRLLALKSRPVDKGLILVADNIRQFDFLFEDFPEDWIDRMGSTWPGPNTWLVPHQDLLPEWVTGQHDTVALRVSDHPQVRELCALVGPLISTSCNPGGRPAAKSRLRVEQYFHGDLDMVLGGALGGRKNPSVIRNLATGEIVRPG.

Residues 4 to 185 enclose the YrdC-like domain; that stretch reads SWRVQQAARE…LATGEIVRPG (182 aa).

Belongs to the SUA5 family. TsaC subfamily.

The protein localises to the cytoplasm. The enzyme catalyses L-threonine + hydrogencarbonate + ATP = L-threonylcarbamoyladenylate + diphosphate + H2O. Its function is as follows. Required for the formation of a threonylcarbamoyl group on adenosine at position 37 (t(6)A37) in tRNAs that read codons beginning with adenine. Catalyzes the conversion of L-threonine, HCO(3)(-)/CO(2) and ATP to give threonylcarbamoyl-AMP (TC-AMP) as the acyladenylate intermediate, with the release of diphosphate. This chain is Threonylcarbamoyl-AMP synthase, found in Pseudomonas putida (strain W619).